The sequence spans 415 residues: MEKQKRGFVHYIVQGSLVKQILVGLIAGILLAWLAPSVAKSVSLLGTLFVGALKAVAPVLVWILVMSSIANHKKGQKTNIRPILILYILGTFFAALVAVAGSFIFPLPLVLAVNDAQMSPPENIIEVIKGLLVNVVANPVNALLNGNYIGILAWAIGLGIALRHAADSTKSLIHDMSEAVTQVVRVVIRFAPVGIFGLVSATIAETGFNALLGYVQLLVVLLSCMLVMALVVNPLIVYWKIRRNPYPLVFACLRESGVTAFFTRSSAANIPVNMAMCRRMNLHEDTYSVSIPLGATINMEGAAVTIPVLTLAAVNTLGIPVDVPTALLLSVVSAICACGASGVAGGSLLLIPLACSMFGISNEIAMQVVAVGLIIGVLQDSAETSLNSSTDVLFTAAVCQAEDDRLSSDQLTQRN.

The next 8 membrane-spanning stretches (helical) occupy residues 15 to 35 (GSLV…AWLA), 45 to 65 (LGTL…WILV), 85 to 105 (ILYI…SFIF), 142 to 162 (ALLN…GIAL), 193 to 213 (VGIF…ALLG), 217 to 237 (LLVV…PLIV), 301 to 321 (GAAV…GIPV), and 331 to 351 (VVSA…LLLI).

It belongs to the dicarboxylate/amino acid:cation symporter (DAACS) (TC 2.A.23) family.

It localises to the cell inner membrane. It catalyses the reaction L-serine(in) + Na(+)(in) = L-serine(out) + Na(+)(out). The enzyme catalyses L-threonine(in) + Na(+)(in) = L-threonine(out) + Na(+)(out). In terms of biological role, involved in the import of serine and threonine into the cell, with the concomitant import of sodium (symport system). The chain is Serine/threonine transporter SstT from Photorhabdus laumondii subsp. laumondii (strain DSM 15139 / CIP 105565 / TT01) (Photorhabdus luminescens subsp. laumondii).